The following is a 341-amino-acid chain: tRNA N6-adenosine threonylcarbamoyltransferase (341 aa).

Residues His-115 and His-119 each coordinate Fe cation. Residues 137 to 141 (IVSGG), Asp-170, Gly-183, Asp-187, and Asn-276 each bind substrate. Asp-304 contacts Fe cation.

This sequence belongs to the KAE1 / TsaD family. Requires Fe(2+) as cofactor.

It localises to the cytoplasm. It catalyses the reaction L-threonylcarbamoyladenylate + adenosine(37) in tRNA = N(6)-L-threonylcarbamoyladenosine(37) in tRNA + AMP + H(+). Required for the formation of a threonylcarbamoyl group on adenosine at position 37 (t(6)A37) in tRNAs that read codons beginning with adenine. Is involved in the transfer of the threonylcarbamoyl moiety of threonylcarbamoyl-AMP (TC-AMP) to the N6 group of A37, together with TsaE and TsaB. TsaD likely plays a direct catalytic role in this reaction. The protein is tRNA N6-adenosine threonylcarbamoyltransferase of Staphylococcus aureus (strain bovine RF122 / ET3-1).